Consider the following 107-residue polypeptide: Rhodocoxin (107 aa).

Positions 2–106 (PTVTYVHPDG…GLIVRLPEEQ (105 aa)) constitute a 2Fe-2S ferredoxin-type domain. Residues C40, C46, C49, and C87 each coordinate [2Fe-2S] cluster.

Belongs to the adrenodoxin/putidaredoxin family. [2Fe-2S] cluster serves as cofactor.

Functionally, ferredoxin-type protein which transfers electrons from rhodocoxin reductase to cytochrome CYP116 (ThcB), which is involved in the degradation of thiocarbamate herbicides. This chain is Rhodocoxin (thcC), found in Rhodococcus erythropolis (Arthrobacter picolinophilus).